We begin with the raw amino-acid sequence, 1153 residues long: Protein unc-13 homolog 4B (1153 aa).

Positions 54–84 are disordered; sequence VLKSSLAPLEENGSGGEEDSDESPDGTLQLS. Positions 162–288 constitute a C2 1 domain; that stretch reads ATHEEIYEAA…MKEIAVTASS (127 aa). D195, D201, D252, F253, and D254 together coordinate Ca(2+). In terms of domain architecture, MHD1 spans 637-755; that stretch reads FEVYLILKRY…RCCIFYAQQM (119 aa). In terms of domain architecture, MHD2 spans 869–975; that stretch reads SNSMDQLMMY…LETSDLIHQY (107 aa). Residues 990 to 1114 enclose the C2 2 domain; it reads PYGQLTITAQ…EATPPGEQIM (125 aa). Ca(2+) contacts are provided by D1019, D1025, D1083, and D1085.

Belongs to the unc-13 family. Interacts with Cam. Requires Ca(2+) as cofactor.

It localises to the cytoplasm. The protein localises to the cytoskeleton. Its subcellular location is the cell projection. It is found in the filopodium. The protein resides in the late endosome. It localises to the lysosome. Its function is as follows. Essential for tracheal development in embryos. Functions with the GTPase Rab39 and downstream of dnd, to regulate lumen fusion between previously separate tracheal branches (anastomosis). Essential component of secretory lysosome-related organelles (SLs) that are present in the tracheal fusion tip cells (FCs). Mediates intracellular fusion of the extending tracheal stalk cell lumen in the FCs by recruiting the SNARE complex component Syx1A to the SLs, this may then enable the SLs to interact with complementary SNAREs (such as Syb) present in the apical membrane of the FC-FC interface and the membranes of the separate tracheal stalk cells. May also function in the maturation and exocytosis of the SLs. This Drosophila melanogaster (Fruit fly) protein is Protein unc-13 homolog 4B.